The chain runs to 413 residues: Histidine--tRNA ligase (413 aa).

It belongs to the class-II aminoacyl-tRNA synthetase family. As to quaternary structure, homodimer.

The protein localises to the cytoplasm. It catalyses the reaction tRNA(His) + L-histidine + ATP = L-histidyl-tRNA(His) + AMP + diphosphate + H(+). The chain is Histidine--tRNA ligase from Ehrlichia canis (strain Jake).